A 245-amino-acid polypeptide reads, in one-letter code: Sugar fermentation stimulation protein homolog (245 aa).

It belongs to the SfsA family.

The protein is Sugar fermentation stimulation protein homolog of Rhodospirillum rubrum (strain ATCC 11170 / ATH 1.1.1 / DSM 467 / LMG 4362 / NCIMB 8255 / S1).